We begin with the raw amino-acid sequence, 277 residues long: Probable endonuclease 4 (277 aa).

The Zn(2+) site is built by His-70, His-108, Glu-145, Asp-178, His-181, His-212, Asp-225, His-227, and Glu-257.

Belongs to the AP endonuclease 2 family. Zn(2+) is required as a cofactor.

The catalysed reaction is Endonucleolytic cleavage to 5'-phosphooligonucleotide end-products.. Its function is as follows. Endonuclease IV plays a role in DNA repair. It cleaves phosphodiester bonds at apurinic or apyrimidinic (AP) sites, generating a 3'-hydroxyl group and a 5'-terminal sugar phosphate. In Mycoplasmopsis pulmonis (strain UAB CTIP) (Mycoplasma pulmonis), this protein is Probable endonuclease 4.